Reading from the N-terminus, the 942-residue chain is Ubiquitin carboxyl-terminal hydrolase 33 (942 aa).

The segment at 37–140 (NHCPHLDSVG…PSLPHVRQPH (104 aa)) adopts a UBP-type zinc-finger fold. Residues Cys-39, His-41, Cys-61, Cys-64, Cys-74, Cys-79, Cys-84, His-91, His-95, His-101, Cys-114, and Cys-117 each coordinate Zn(2+). The region spanning 185–715 (TGLKNIGNTC…EAYVLFYRKS (531 aa)) is the USP domain. Cys-194 (nucleophile) is an active-site residue. Residues 294 to 357 (VEEDPQTITT…MLIQDDENNS (64 aa)) are disordered. The segment covering 315 to 327 (DVDFQSCESCSNS) has biased composition (polar residues). Phosphoserine is present on Ser-377. Positions 419 to 431 (DLSTPQILPSNEG) are enriched in polar residues. Residues 419 to 469 (DLSTPQILPSNEGVNPRLSASPPKSGNLWPGLAPPHKKAQSASPKRKKQHK) form a disordered region. At Ser-439 the chain carries Phosphoserine. Over residues 453–469 (PHKKAQSASPKRKKQHK) the composition is skewed to basic residues. The active-site Proton acceptor is His-673. DUSP domains follow at residues 717 to 810 (EEAQ…LYIC) and 818 to 921 (EKIE…RPPV).

Belongs to the peptidase C19 family. USP20/USP33 subfamily. Interacts with VHL, leading to its ubiquitination and subsequent degradation. Interacts with ARRB1 and ARRB2. Interacts with ADRB2. Interacts with DIO2. Interacts with ROBO1. Interacts with SELENBP1; in a selenium-dependent manner. Interacts with CCP110. In terms of processing, ubiquitinated via a VHL-dependent pathway for proteasomal degradation. As to expression, widely expressed.

The protein localises to the cytoplasm. It is found in the perinuclear region. Its subcellular location is the cytoskeleton. The protein resides in the microtubule organizing center. It localises to the centrosome. The protein localises to the golgi apparatus. It catalyses the reaction Thiol-dependent hydrolysis of ester, thioester, amide, peptide and isopeptide bonds formed by the C-terminal Gly of ubiquitin (a 76-residue protein attached to proteins as an intracellular targeting signal).. Its function is as follows. Deubiquitinating enzyme involved in various processes such as centrosome duplication, cellular migration and beta-2 adrenergic receptor/ADRB2 recycling. Involved in regulation of centrosome duplication by mediating deubiquitination of CCP110 in S and G2/M phase, leading to stabilize CCP110 during the period which centrioles duplicate and elongate. Involved in cell migration via its interaction with intracellular domain of ROBO1, leading to regulate the Slit signaling. Plays a role in commissural axon guidance cross the ventral midline of the neural tube in a Slit-dependent manner, possibly by mediating the deubiquitination of ROBO1. Acts as a regulator of G-protein coupled receptor (GPCR) signaling by mediating the deubiquitination of beta-arrestins (ARRB1 and ARRB2) and beta-2 adrenergic receptor (ADRB2). Plays a central role in ADRB2 recycling and resensitization after prolonged agonist stimulation by constitutively binding ADRB2, mediating deubiquitination of ADRB2 and inhibiting lysosomal trafficking of ADRB2. Upon dissociation, it is probably transferred to the translocated beta-arrestins, leading to beta-arrestins deubiquitination and disengagement from ADRB2. This suggests the existence of a dynamic exchange between the ADRB2 and beta-arrestins. Deubiquitinates DIO2, thereby regulating thyroid hormone regulation. Mediates deubiquitination of both 'Lys-48'- and 'Lys-63'-linked polyubiquitin chains. The protein is Ubiquitin carboxyl-terminal hydrolase 33 (USP33) of Homo sapiens (Human).